The primary structure comprises 244 residues: MEMKRRVRAVRRDQIQKRWRPLEDKQRQEIIIIFRTCSRLVLNTIKSETRKSLAEEWFMNILLKIEAPLRNLPVPRKRKESILFSQLLSSNMQLEQQLYSDLDHINVLQQELKVETARLENEQKSYEEMKQNMAINNSRLADLKSKLHPYLKKGLKISHDNFSDSNDFSFQKKLNTEDSNTSKTSTLDMYKEKLKPFTKTMQIHANKTVQLSQTIQKATLLLQRLNNTKNIGLNKSSKLKIKNI.

This sequence belongs to the CENP-Q/OKP1 family. In terms of assembly, component of the heterotetrameric kinetochore subcomplex COMA, which consists of fta2, fta7, mal2 and mis17. The COMA subcomplex is part of a larger constitutive centromere-associated network (CCAN) (also known as central kinetochore Sim4 complex in fission yeast), which is composed of at least cnl2, cnp3, cnp20, fta1, fta2, fta3, fta4, fta6, fta7, mal2, mhf1, mhf2, mis6, mis15, mis17, sim4 and wip1.

Its subcellular location is the nucleus. The protein localises to the chromosome. It localises to the centromere. It is found in the kinetochore. The protein resides in the cytoplasm. Its subcellular location is the cytoskeleton. The protein localises to the microtubule organizing center. It localises to the spindle pole body. In terms of biological role, component of the kinetochore, a multiprotein complex that assembles on centromeric DNA and attaches chromosomes to spindle microtubules, mediating chromosome segregation and sister chromatid segregation during meiosis and mitosis. Component of the inner kinetochore COMA complex, which connects centromere-associated proteins and the outer kinetochore. COMA interacts with other inner kinetochore proteins to form the inner kinetochore constitutive centromere-associated network (CCAN), which serves as a structural platform for outer kinetochore assembly. This chain is Inner kinetochore subunit fta7 (fta7), found in Schizosaccharomyces pombe (strain 972 / ATCC 24843) (Fission yeast).